We begin with the raw amino-acid sequence, 123 residues long: MEFSVESLETPALTKAHLAELLFEQIGLNKRESKEMIDAFFELISDRLVEGKDVKISGFGNFQIRTKAPRPGRNPRTGEAIPIESRRVVTFHASHKLKEQIQGSALLGLKTANIFAEDNGPVT.

It belongs to the bacterial histone-like protein family. As to quaternary structure, heterodimer of an alpha and a beta chain.

Functionally, this protein is one of the two subunits of integration host factor, a specific DNA-binding protein that functions in genetic recombination as well as in transcriptional and translational control. The protein is Integration host factor subunit alpha of Polaromonas naphthalenivorans (strain CJ2).